We begin with the raw amino-acid sequence, 95 residues long: MLFTVSHSPYHCDLSALLRLVTSEDAILFLQDGVMAVLKNSESLNLLLNNQASLFVLEDDVIARGLCGQISDSAMLIGYTHFVDLTLKHQQQLAW.

This sequence belongs to the DsrH/TusB family. Heterohexamer, formed by a dimer of trimers. The hexameric TusBCD complex contains 2 copies each of TusB, TusC and TusD. The TusBCD complex interacts with TusE.

It localises to the cytoplasm. Functionally, part of a sulfur-relay system required for 2-thiolation of 5-methylaminomethyl-2-thiouridine (mnm(5)s(2)U) at tRNA wobble positions. The polypeptide is Protein TusB (Yersinia enterocolitica serotype O:8 / biotype 1B (strain NCTC 13174 / 8081)).